The sequence spans 247 residues: MCLLSLPLLLFLQYTRAKAGEVIGGTECKPHSRPYMAYLEIVSSEGYEKDCGGFLIRRNFVLTAAHCAGRSLTVNLGVHNKKMKEDTWQRLKVIKQFLHPNYNSSVLLHDIMLLKLEKKANLTLAVGTLPLPPECNFLTSGRMCRAAGWGRTNVEEPASDTLQEVKLRLMDPQACKHFPNFNHNLQLCVGNPRKRKSVFKGDSGGPLLCAGIAQGIVSYAHRNAKPPVVFTRISHYRPWINKILKAN.

The signal sequence occupies residues 1-17; sequence MCLLSLPLLLFLQYTRA. Residues 18–21 constitute a propeptide, activation peptide; the sequence is KAGE. The region spanning 22–245 is the Peptidase S1 domain; the sequence is VIGGTECKPH…YRPWINKILK (224 aa). Cys51 and Cys67 are oxidised to a cystine. His66 (charge relay system) is an active-site residue. Asn103 is a glycosylation site (N-linked (GlcNAc...) asparagine). Asp110 (charge relay system) is an active-site residue. Asn121 carries an N-linked (GlcNAc...) asparagine glycan. 2 disulfides stabilise this stretch: Cys144–Cys209 and Cys175–Cys188. Catalysis depends on Ser203, which acts as the Charge relay system.

This sequence belongs to the peptidase S1 family. Granzyme subfamily.

The protein localises to the secreted. The protein resides in the cytoplasmic granule. It carries out the reaction Preferential cleavage: Phe-|-Xaa &gt; Tyr-|-Xaa &gt; Trp-|-Xaa &gt; Leu-|-Xaa.. Functionally, major secreted protease of mast cells with suspected roles in vasoactive peptide generation, extracellular matrix degradation, and regulation of gland secretion. The sequence is that of Chymase from Cavia porcellus (Guinea pig).